An 842-amino-acid polypeptide reads, in one-letter code: Pentatricopeptide repeat-containing protein At3g23020 (842 aa).

Residues 40–61 (YVPGTHESDKGPQRSTRNGDRG) are disordered. The span at 45 to 59 (HESDKGPQRSTRNGD) shows a compositional bias: basic and acidic residues. PPR repeat units follow at residues 186 to 220 (NVIH…GIKP), 221 to 255 (INST…GMQP), 256 to 290 (DEVT…ENKA), 297 to 331 (SSYT…GIVP), 332 to 362 (TTVT…MKLH), 366 to 400 (DTRT…GLKP), 401 to 435 (DPVS…NVEI), 436 to 470 (DEYT…GNMS), 474 to 500 (YSAN…CQEV), 504 to 538 (TVIE…GVTP), 539 to 573 (DKCT…GYVS), 574 to 608 (DCIP…NIEP), 609 to 643 (DVVV…GIPG), 644 to 674 (NSVI…LLQS), 682 to 712 (DVYT…MKQR), 716 to 750 (NEFT…KILT), 751 to 785 (DPLS…GIQP), and 786 to 820 (DDST…EIKR).

It belongs to the PPR family. P subfamily.

This Arabidopsis thaliana (Mouse-ear cress) protein is Pentatricopeptide repeat-containing protein At3g23020.